The primary structure comprises 1201 residues: MEIPIQVAVRIFPHRELKDLLRSFGPTEPKKDAQAVDEGADSKDSEAQVPAAEKDNPSISETDPNGNAEQDSAADSKTIPDANGNDSGQKDYPDSAYCVQAIPISASALGLPSALPGGDPMDSIAAGLIQVGPHTVPVTHALPSSSSQEQVYHQTVFPLITLFLEGFDASVVTYGQRGQGKSYTLYGNVQDPTLTDSTEGVVQLCVRDIFSHISLHPERTYAINVGFVEICGGDVCDLLGMGNIHCTNVDAVFHWLQVGLSARQSLPAHTLFTLTLEQQWVSKEGLLQHRLSTASFSDLCGTERCGDQPPGRPLDAGLCMLEQVISTLTDPGLMYGVNGNIPYGQTTLTTLLKDSFGGRAQTLVILCVSPLEEHLPETLGNLQFAFKVQCVRNFVIMNTYSDDNTMIVQPAEPVPESNSSAGPLSQAGPGDNFGLQFAASQWSKLVTNAEGLFSKLIDSKLITEVEKEQIEEWLFLKQECEECLSSTEAMRQQKQLVPILEAEEPEDVNSEAANSESPNSDNENDTDNESHRPDLDDKIESLMEEFRDKTDALILEKHAEYLSKHPKAVMQSQDREIEAQPPEENGDDRKVSIGSRRRSVQPGASLSTAELAMLNRVASQQPPPPIDPESVVDPLESSSGEGIRQAALAAAAATAPIEQLQKKLRKLVAEIEGKQRQLREIEETIQVKQNIIAELVKNSDTRSHAKQRFHKKRAKLEAECDKAKKQLGKALVQGRDQSEIERWTTIIGHLERRLEDLSSMKHIAGESGQKVKKLQQSVGESRKQADDLQKKLRKECKLRCQMEAELAKLRESRETGKELVKAQGSPEQQGRQLKAVQARITHLNHILREKSDNLEEQPGPEQQETLRHEIRNLRGTRDLLLEERCHLDRKLKRDKVLTQKEERKLLECDEAIEAIDAAIEFKNEMITGHRSIDTSDRIQREKGEQMLMARLNRLSTEEMRTLLYKYFTKVIDLRDSSRKLELQLVQLERERDAWEWKERVLSNAVRQARLEGERNAVLLQRQHEMKLTLMLRHMAEETSASSASYGERALAPACVAPPVQASSDFDYDHFYKGGGNPSKALIKAPKPMPTGSALDKYKDKEQRSGRNIFAKFHVLTRYASAAAAGSSGSTAEESTALIESTTTATATTTSTTTTGAVGKVKDKALVSFRPEQLKRLMPAPTATKVTRQKNKIIIQDASRRN.

Residues 4–391 (PIQVAVRIFP…LQFAFKVQCV (388 aa)) enclose the Kinesin motor domain. The segment at 23-92 (SFGPTEPKKD…NGNDSGQKDY (70 aa)) is disordered. Residues 28-56 (EPKKDAQAVDEGADSKDSEAQVPAAEKDN) are compositionally biased toward basic and acidic residues. Residues 57 to 75 (PSISETDPNGNAEQDSAAD) are compositionally biased toward polar residues. Position 175–182 (175–182 (GQRGQGKS)) interacts with ATP. Disordered stretches follow at residues 502-536 (AEEP…PDLD), 565-606 (HPKA…GASL), and 618-639 (ASQQ…ESSS). Residues 510 to 521 (SEAANSESPNSD) show a composition bias toward low complexity. 2 positions are modified to phosphoserine: S599 and S605. 2 coiled-coil regions span residues 652–821 (AATA…ELVK) and 968–1001 (TKVI…ERVL).

The protein belongs to the TRAFAC class myosin-kinesin ATPase superfamily. Kinesin family. KIF27 subfamily. As to quaternary structure, homodimer (Potential). Binds microtubules. Interacts with ci, smo, sgg, CkIalpha and protein kinase A catalytic subunit. Interacts (via kinesin motor domain) with Ubr3. Post-translationally, polyubiquitinated by Ubr3, which leads to proteasomal degradation.

The protein localises to the cytoplasm. It localises to the cytoskeleton. Functionally, regulates cubitus interruptus (ci) processing by recruiting multiple kinases to promote its efficient phosphorylation. Scaffolds multiple kinases and ci into proximity to promote its hyperphosphorylation, which then targets it for SCFSlimb/proteasome-mediated processing to generate its repressor form. Hh signaling inhibits ci phosphorylation by interfering with the cos-ci-kinases complex formation. Negatively regulates hh-signaling pathways during various processes, including photoreceptor differentiation. May negatively regulate a hh-signaling pathway which functions in the intestinal immune response to bacterial uracil by activating the Duox-dependent production of reactive oxygen species (ROS). This is Kinesin-like protein costa (cos) from Drosophila melanogaster (Fruit fly).